The following is a 155-amino-acid chain: MAKRFGYSFQNFDPKRMARASARDLRISPKLAVEVCRELRGMMLNDALRYLDDVIALKRPVPLKRYNDSQGHKPGKGFGPGRYPVKVAKAIKKVLLNVKNNAVQKGLDPDKLKIIHIAAHKGPVLRGWYPRAFGRATPFNEQTTHIEVVVEEIRR.

This sequence belongs to the universal ribosomal protein uL22 family. Part of the 50S ribosomal subunit.

This protein binds specifically to 23S rRNA. It makes multiple contacts with different domains of the 23S rRNA in the assembled 50S subunit and ribosome. In terms of biological role, the globular domain of the protein is located near the polypeptide exit tunnel on the outside of the subunit, while an extended beta-hairpin is found that lines the wall of the exit tunnel in the center of the 70S ribosome. This chain is Large ribosomal subunit protein uL22, found in Pyrococcus furiosus (strain ATCC 43587 / DSM 3638 / JCM 8422 / Vc1).